Consider the following 134-residue polypeptide: MASNRGAGGSLYGGADPYRSREGLSTRNASGSEEIQLRIDPMHSDLDDEILGLHGQVRQLKNIAQEIGSEAKSQRDFLDELQMTLIRAQAGVKNNIRKLNLSIIRSGNNHIMHVVLFALLLFFILYMWSKMFKR.

The span at 1-12 shows a compositional bias: gly residues; that stretch reads MASNRGAGGSLY. The segment at 1-31 is disordered; that stretch reads MASNRGAGGSLYGGADPYRSREGLSTRNASG. The Cytoplasmic segment spans residues 1–110; that stretch reads MASNRGAGGS…LSIIRSGNNH (110 aa). Residues 40–102 enclose the t-SNARE coiled-coil homology domain; it reads DPMHSDLDDE…KNNIRKLNLS (63 aa). The helical; Anchor for type IV membrane protein transmembrane segment at 111-131 threads the bilayer; it reads IMHVVLFALLLFFILYMWSKM. Over 132–134 the chain is Vesicular; sequence FKR.

The protein belongs to the BET1 family.

The protein resides in the golgi apparatus membrane. The protein localises to the endoplasmic reticulum membrane. Its function is as follows. Required for vesicular transport from the ER to the Golgi complex. Functions as a SNARE associated with ER-derived vesicles. This Arabidopsis thaliana (Mouse-ear cress) protein is Bet1-like protein At1g29060.